We begin with the raw amino-acid sequence, 766 residues long: Protein zer-1 homolog (766 aa).

A2 is subject to N-acetylalanine. LRR repeat units lie at residues 226–245 (SLVL…IVQL), 246–268 (HKLR…KLTR), and 278–302 (LGNL…KMEE). 5 ARM repeats span residues 427-467 (RSEQ…NFGI), 511-556 (DNDH…NITD), 558-600 (TPDN…NVAE), 602-643 (KELR…HIMF), and 714-756 (PDKY…HCSN).

It belongs to the zyg-11 family. Interacts with the ELOC-ELOB/Elongin BC complex. Part of an E3 ubiquitin ligase complex including ZER1, CUL2 and Elongin BC.

Serves as substrate adapter subunit in the E3 ubiquitin ligase complex ZYG11B-CUL2-Elongin BC. Acts redudantly with ZYG11B to target substrates bearing N-terminal glycine degrons for proteasomal degradation. Involved in the clearance of proteolytic fragments generated by caspase cleavage during apoptosis since N-terminal glycine degrons are strongly enriched at caspase cleavage sites. Also important in the quality control of protein N-myristoylation in which N-terminal glycine degrons are conditionally exposed after a failure of N-myristoylation. This chain is Protein zer-1 homolog (ZER1), found in Pongo abelii (Sumatran orangutan).